We begin with the raw amino-acid sequence, 172 residues long: Large ribosomal subunit protein uL10 (172 aa).

This sequence belongs to the universal ribosomal protein uL10 family. Part of the ribosomal stalk of the 50S ribosomal subunit. The N-terminus interacts with L11 and the large rRNA to form the base of the stalk. The C-terminus forms an elongated spine to which L12 dimers bind in a sequential fashion forming a multimeric L10(L12)X complex.

Forms part of the ribosomal stalk, playing a central role in the interaction of the ribosome with GTP-bound translation factors. This chain is Large ribosomal subunit protein uL10, found in Rhodopseudomonas palustris (strain BisA53).